Here is a 435-residue protein sequence, read N- to C-terminus: ATP-dependent protease ATPase subunit HslU (435 aa).

Residues Val-18, Gly-60–Glu-65, Asp-248, Glu-313, and Arg-385 each bind ATP.

The protein belongs to the ClpX chaperone family. HslU subfamily. As to quaternary structure, a double ring-shaped homohexamer of HslV is capped on each side by a ring-shaped HslU homohexamer. The assembly of the HslU/HslV complex is dependent on binding of ATP.

The protein localises to the cytoplasm. Functionally, ATPase subunit of a proteasome-like degradation complex; this subunit has chaperone activity. The binding of ATP and its subsequent hydrolysis by HslU are essential for unfolding of protein substrates subsequently hydrolyzed by HslV. HslU recognizes the N-terminal part of its protein substrates and unfolds these before they are guided to HslV for hydrolysis. This is ATP-dependent protease ATPase subunit HslU from Rhodospirillum rubrum (strain ATCC 11170 / ATH 1.1.1 / DSM 467 / LMG 4362 / NCIMB 8255 / S1).